We begin with the raw amino-acid sequence, 443 residues long: Proline--tRNA ligase (443 aa).

It belongs to the class-II aminoacyl-tRNA synthetase family. ProS type 2 subfamily. In terms of assembly, homodimer.

Its subcellular location is the cytoplasm. It carries out the reaction tRNA(Pro) + L-proline + ATP = L-prolyl-tRNA(Pro) + AMP + diphosphate. Catalyzes the attachment of proline to tRNA(Pro) in a two-step reaction: proline is first activated by ATP to form Pro-AMP and then transferred to the acceptor end of tRNA(Pro). This Zymomonas mobilis subsp. mobilis (strain ATCC 10988 / DSM 424 / LMG 404 / NCIMB 8938 / NRRL B-806 / ZM1) protein is Proline--tRNA ligase.